We begin with the raw amino-acid sequence, 232 residues long: Small ribosomal subunit protein uS3 (232 aa).

Residues 39 to 107 (IRAILHKELK…DVVINIVEIR (69 aa)) form the KH type-2 domain.

The protein belongs to the universal ribosomal protein uS3 family. In terms of assembly, part of the 30S ribosomal subunit. Forms a tight complex with proteins S10 and S14.

Binds the lower part of the 30S subunit head. Binds mRNA in the 70S ribosome, positioning it for translation. The sequence is that of Small ribosomal subunit protein uS3 from Rhodopseudomonas palustris (strain BisA53).